Consider the following 428-residue polypeptide: Tyrosine--tRNA ligase (428 aa).

Residue Tyr41 coordinates L-tyrosine. A 'HIGH' region motif is present at residues 46 to 55 (PTADSLHLGH). Positions 179 and 183 each coordinate L-tyrosine. Positions 239–243 (KFGKT) match the 'KMSKS' region motif. An ATP-binding site is contributed by Lys242. An S4 RNA-binding domain is found at 361-418 (TDLMQALVDAELQPSRGQARKTIASNAVTINGEKQSDPEYIFNDEDRLFGRYTLLRRG).

The protein belongs to the class-I aminoacyl-tRNA synthetase family. TyrS type 1 subfamily. Homodimer.

Its subcellular location is the cytoplasm. It carries out the reaction tRNA(Tyr) + L-tyrosine + ATP = L-tyrosyl-tRNA(Tyr) + AMP + diphosphate + H(+). Functionally, catalyzes the attachment of tyrosine to tRNA(Tyr) in a two-step reaction: tyrosine is first activated by ATP to form Tyr-AMP and then transferred to the acceptor end of tRNA(Tyr). This is Tyrosine--tRNA ligase from Salmonella arizonae (strain ATCC BAA-731 / CDC346-86 / RSK2980).